Consider the following 695-residue polypeptide: Probable glutamine--tRNA ligase (695 aa).

The 'HIGH' region motif lies at 201–211 (PEPNGILHIGH). ATP-binding positions include 202 to 204 (EPN) and 208 to 214 (HIGHAKA). The L-glutamine site is built by Asp-234 and Tyr-391. ATP is bound by residues Thr-410, 439 to 440 (RL), and 447 to 449 (LSK). The 'KMSKS' region motif lies at 446–450 (VLSKR).

This sequence belongs to the class-I aminoacyl-tRNA synthetase family.

It carries out the reaction tRNA(Gln) + L-glutamine + ATP = L-glutaminyl-tRNA(Gln) + AMP + diphosphate. The sequence is that of Probable glutamine--tRNA ligase from Vairimorpha ceranae (strain BRL01) (Microsporidian parasite).